Reading from the N-terminus, the 123-residue chain is Small ribosomal subunit protein uS12 (123 aa).

Residues 1–24 (MPTINQLVRKGRTPQKVKSKVPAM) form a disordered region. Residues 9–19 (RKGRTPQKVKS) are compositionally biased toward basic residues. Aspartate 89 carries the post-translational modification 3-methylthioaspartic acid.

Belongs to the universal ribosomal protein uS12 family. Part of the 30S ribosomal subunit. Contacts proteins S8 and S17. May interact with IF1 in the 30S initiation complex.

With S4 and S5 plays an important role in translational accuracy. In terms of biological role, interacts with and stabilizes bases of the 16S rRNA that are involved in tRNA selection in the A site and with the mRNA backbone. Located at the interface of the 30S and 50S subunits, it traverses the body of the 30S subunit contacting proteins on the other side and probably holding the rRNA structure together. The combined cluster of proteins S8, S12 and S17 appears to hold together the shoulder and platform of the 30S subunit. This Sphingopyxis alaskensis (strain DSM 13593 / LMG 18877 / RB2256) (Sphingomonas alaskensis) protein is Small ribosomal subunit protein uS12.